A 209-amino-acid polypeptide reads, in one-letter code: Thymidylate kinase (209 aa).

11-18 (GIEGAGKT) contributes to the ATP binding site.

Belongs to the thymidylate kinase family.

It carries out the reaction dTMP + ATP = dTDP + ADP. In terms of biological role, phosphorylation of dTMP to form dTDP in both de novo and salvage pathways of dTTP synthesis. This chain is Thymidylate kinase (tmk), found in Pasteurella multocida (strain Pm70).